The following is a 208-amino-acid chain: Cell death-inducing p53-target protein 1 (208 aa).

Composition is skewed to pro residues over residues 1–13 (MSSEPPPPYPGGP) and 36–67 (MQPPPGMPLPPADIGPPPYEPPGHPMPQPGFI). The disordered stretch occupies residues 1-71 (MSSEPPPPYP…PQPGFIPPHM (71 aa)). In terms of domain architecture, LITAF spans 122–206 (ATTVTVLQGE…CKAYIYTYKR (85 aa)). Residues Cys142 and Cys145 each contribute to the Zn(2+) site. Positions 164–184 (LGFFCCFMGCDLGCCLIPCLI) are membrane-binding amphipathic helix. Residues Cys194 and Cys197 each contribute to the Zn(2+) site.

It belongs to the CDIP1/LITAF family. In terms of tissue distribution, highly expressed in brain. Expressed at lower level in heart, skeletal muscle, kidney, pancreas and liver. Weakly or not expressed in placenta and lung.

Its subcellular location is the late endosome membrane. It is found in the lysosome membrane. Its function is as follows. Acts as an important p53/TP53-apoptotic effector. Regulates TNF-alpha-mediated apoptosis in a p53/TP53-dependent manner. The protein is Cell death-inducing p53-target protein 1 (CDIP1) of Homo sapiens (Human).